The chain runs to 136 residues: Ribosome-binding factor A (136 aa).

The protein belongs to the RbfA family. As to quaternary structure, monomer. Binds 30S ribosomal subunits, but not 50S ribosomal subunits or 70S ribosomes.

It is found in the cytoplasm. One of several proteins that assist in the late maturation steps of the functional core of the 30S ribosomal subunit. Associates with free 30S ribosomal subunits (but not with 30S subunits that are part of 70S ribosomes or polysomes). Required for efficient processing of 16S rRNA. May interact with the 5'-terminal helix region of 16S rRNA. In Cellvibrio japonicus (strain Ueda107) (Pseudomonas fluorescens subsp. cellulosa), this protein is Ribosome-binding factor A.